The chain runs to 776 residues: MTAETRIHELRAELDQHNYRYYVLDEPSVPDAEYDRLFNELKALEAEHPHLVTPDSPTQRVGGEALSAFSQVRHEVPMLSLGNAFEETDLREFGRRVVEGLDQPGAVDYSCKPKLDGLAVSLLYRDGQLVQGATRGDGTTGEDISANVRTVRNIPLKLQGEGWPAVLEVRGEVYMSKAGFDRLNAAQAEAGGKTFANPRNAAAGSLRQLDSKITASRPLEFCCYGVGQVSESIGDSHIGVLEQLKAWGMPISRELRHAAGIEECLAYYRDIGERRNSLPYEIDGVVFKVNNLAAQRELGFRAREPRWAIAHKFPAMEELTEVLDVEFQVGRTGAVTPVARLKPVKVAGVTVSNATLHNMDEIARLGLRIGDTVIIRRAGDVIPQVMQVVLERRPDDARPVEVPSACPVCGSQVERTQLVKRSKGKETTSEGAVYRCVGRLACGAQLKQAIIHYVSRRAMDIDGLGEKSVEQLVDEGLIGSPADLYKLAFEQIVGLEGFAEVSSKKLLDAIEASKRPSLARFIYALGIPDVGEETAKVLARSLGSLARVQQALPQVLTYLPDIGLEVAYEIHNFFEDEHNQKVIEQLLASGMKLQDEGELAAEFAASTTLAGMIAKLDIASVGPTGAEKLVAKLDSLEKIIAADGIDLRQALAAKQADAVREFFKDEANQKLARDIEAQLLAFGMHWSCEKKVAEGLPLAGQTWVLTGTLERMSRDIAKDKLESLGAKVAGSVSGKTHCVVAGPGAGSKLAKASELGVKVLDEDAFVTFLAEQGIVV.

Residues 31 to 35 (DAEYD) and 80 to 81 (SL) each bind NAD(+). Lysine 114 functions as the N6-AMP-lysine intermediate in the catalytic mechanism. NAD(+) contacts are provided by arginine 135, glutamate 172, lysine 288, and lysine 312. Zn(2+) contacts are provided by cysteine 406, cysteine 409, cysteine 436, and cysteine 442. The 84-residue stretch at 693–776 (AEGLPLAGQT…TFLAEQGIVV (84 aa)) folds into the BRCT domain.

It belongs to the NAD-dependent DNA ligase family. LigA subfamily. The cofactor is Mg(2+). Mn(2+) serves as cofactor.

The catalysed reaction is NAD(+) + (deoxyribonucleotide)n-3'-hydroxyl + 5'-phospho-(deoxyribonucleotide)m = (deoxyribonucleotide)n+m + AMP + beta-nicotinamide D-nucleotide.. DNA ligase that catalyzes the formation of phosphodiester linkages between 5'-phosphoryl and 3'-hydroxyl groups in double-stranded DNA using NAD as a coenzyme and as the energy source for the reaction. It is essential for DNA replication and repair of damaged DNA. The polypeptide is DNA ligase (Pseudomonas putida (strain GB-1)).